The primary structure comprises 4128 residues: DNA-dependent protein kinase catalytic subunit (4128 aa).

Lys-117 bears the N6-acetyllysine mark. The stretch at 288 to 323 (DNYITLFEVLSKWCSHTNVELKKAAHSALESFLRQI) is one HEAT 1 repeat. A phosphoserine mark is found at Ser-511, Ser-686, Ser-840, and Ser-891. HEAT repeat units follow at residues 1001-1037 (QDTV…LKWS) and 1050-1086 (PVNS…YKEF). Residue Ser-1062 is modified to Phosphoserine. Lys-1206 is modified (N6-acetyllysine). The interaction with C1D stretch occupies residues 1501–1536 (LDPSCKSLANGLLELAFGFGGLCDHLVSLLLNSAML). Residues 1501–1536 (LDPSCKSLANGLLELAFGFGGLCDHLVSLLLNSAML) form a leucine-zipper region. A TPR 1 repeat occupies 1720-1753 (PMKSDEFPPDSLKYNNYVDCMKKFLDALELSQSP). Lys-1967 is modified (N6-acetyllysine). A disordered region spans residues 2049–2071 (YSYSSQDRKPTTGHFQRREHQDS). Ser-2053 is modified (phosphoserine; by autocatalysis). A compositionally biased stretch (basic and acidic residues) spans 2054–2070 (QDRKPTTGHFQRREHQD). At Lys-2255 the chain carries N6-acetyllysine. The tract at residues 2432-3213 (LDIVYKMVAK…DHSMSVDEDE (782 aa)) is KIP-binding. Thr-2531 carries the post-translational modification Phosphothreonine. Residue Thr-2605 is modified to Phosphothreonine; by autocatalysis. A Phosphoserine; by autocatalysis modification is found at Ser-2608. Positions 2614–2635 (TQTQEGPLSDQRQKPGQVRATQ) are disordered. Thr-2634 and Thr-2643 each carry phosphothreonine; by autocatalysis. Positions 2738 to 2766 (EKLSLLYAKRGLMEQKLEKDIKSEFKMKQ) are may split the end of the DNA molecule, with the two strands separating around the region. Residues 2907–3539 (PTKRVRGKTC…IYPFIISSES (633 aa)) enclose the FAT domain. TPR repeat units follow at residues 2921–2954 (VLRW…TQDT) and 2956–2983 (NALL…LEWV). Phosphoserine is present on Ser-3206. 4 positions are modified to N6-acetyllysine: Lys-3241, Lys-3260, Lys-3638, and Lys-3642. The region spanning 3722 to 4053 (FDERVKVMLS…IRYAKRKLAG (332 aa)) is the PI3K/PI4K catalytic domain. The interval 3728–3734 (VMLSLRK) is G-loop. A phosphoserine mark is found at Ser-3731 and Ser-3821. A catalytic loop region spans residues 3919 to 3927 (GIGDRHLNN). Residues 3939 to 3964 (GIDFGHAFGSATQFLPVPELMPFRLT) are activation loop. Ser-4026 bears the Phosphoserine mark. Positions 4096-4128 (SGLSEETQVKCLVDQATDPNILGRTWEGWEPWM) constitute an FATC domain.

It belongs to the PI3/PI4-kinase family. In terms of assembly, DNA-PK is a heterotrimer of PRKDC and the Ku dimer (composed of XRCC6/Ku70 and XRCC5/Ku86). Formation of this complex may be promoted by interaction with ILF3. Component of the core long-range non-homologous end joining (NHEJ) complex (also named DNA-PK complex) composed of PRKDC, LIG4, XRCC4, XRCC6/Ku70, XRCC5/Ku86 and NHEJ1/XLF. Additional component of the NHEJ complex includes PAXX. Following autophosphorylation, PRKDC dissociates from DNA. Interacts with DNA-PKcs-interacting protein (KIP) with the region upstream the kinase domain. PRKDC alone also interacts with and phosphorylates DCLRE1C, thereby activating the latent endonuclease activity of this protein. Interacts with C1D. Interacts with TTI1 and TELO2. Interacts with CIB1. Interacts with SETX. Interacts with NR4A3; the DNA-dependent protein kinase complex DNA-PK phosphorylates and activates NR4A3 and prevents NR4A3 ubiquitination and degradation. Interacts with BRAT1. Part of the HDP-RNP complex composed of at least HEXIM1, PRKDC, XRCC5, XRCC6, paraspeckle proteins (SFPQ, NONO, PSPC1, RBM14, and MATR3) and NEAT1 RNA. Interacts with KAT5. Post-translationally, autophosphorylated at two clusters, the T2609 cluster and the S2056 cluster. Autophosphorylated on Ser-2053, Thr-2605, Thr-2634 and Thr-2643. Ser-2053 and Thr-2605 are DNA damage-inducible phosphorylation sites (inducible with ionizing radiation, IR) dephosphorylated by PPP5C. Autophosphorylation induces a conformational change that leads to remodeling of the DNA-PK complex, requisite for efficient end processing and DNA repair. Autophosphorylation in trans within DNA-PK complexes loaded on DNA ends leads to the dissociation of PRKDC from DNA and the transition into the short-range NHEJ complex. Autophosphorylation of the T2609 cluster is required for hematopoietic development and protein synthesis in erythrocytes precursors. S-nitrosylated by GAPDH. In terms of processing, polyubiquitinated by RNF144A, leading to proteasomal degradation.

Its subcellular location is the nucleus. The protein resides in the nucleolus. It localises to the cytoplasm. The protein localises to the cytosol. It carries out the reaction L-seryl-[protein] + ATP = O-phospho-L-seryl-[protein] + ADP + H(+). The enzyme catalyses L-threonyl-[protein] + ATP = O-phospho-L-threonyl-[protein] + ADP + H(+). Its activity is regulated as follows. Activity seems to be attenuated by autophosphorylation. Binding to the SL1 region of U3 small nucleolar RNA promotes auto-phosphorylation activity. Inhibited by wortmannin. Functionally, serine/threonine-protein kinase that acts as a molecular sensor for DNA damage. Involved in DNA non-homologous end joining (NHEJ) required for double-strand break (DSB) repair and V(D)J recombination. Must be bound to DNA to express its catalytic properties. Promotes processing of hairpin DNA structures in V(D)J recombination by activation of the hairpin endonuclease artemis (DCLRE1C). Recruited by XRCC5 and XRCC6 to DNA ends and is required to (1) protect and align broken ends of DNA, thereby preventing their degradation, (2) and sequester the DSB for repair by NHEJ. Acts as a scaffold protein to aid the localization of DNA repair proteins to the site of damage. The assembly of the DNA-PK complex at DNA ends is also required for the NHEJ ligation step. Found at the ends of chromosomes, suggesting a further role in the maintenance of telomeric stability and the prevention of chromosomal end fusion. Also involved in modulation of transcription. As part of the DNA-PK complex, involved in the early steps of ribosome assembly by promoting the processing of precursor rRNA into mature 18S rRNA in the small-subunit processome. Binding to U3 small nucleolar RNA, recruits PRKDC and XRCC5/Ku86 to the small-subunit processome. Recognizes the substrate consensus sequence [ST]-Q. Phosphorylates 'Ser-139' of histone variant H2AX, thereby regulating DNA damage response mechanism. Phosphorylates ASF1A, DCLRE1C, c-Abl/ABL1, histone H1, HSPCA, c-jun/JUN, p53/TP53, PARP1, POU2F1, DHX9, FH, SRF, NHEJ1/XLF, XRCC1, XRCC4, XRCC5, XRCC6, WRN, MYC and RFA2. Can phosphorylate C1D not only in the presence of linear DNA but also in the presence of supercoiled DNA. Ability to phosphorylate p53/TP53 in the presence of supercoiled DNA is dependent on C1D. Acts as a regulator of the phosphatidylinositol 3-kinase/protein kinase B signal transduction by mediating phosphorylation of 'Ser-473' of protein kinase B (PKB/AKT1, PKB/AKT2, PKB/AKT3), promoting their activation. Contributes to the determination of the circadian period length by antagonizing phosphorylation of CRY1 'Ser-588' and increasing CRY1 protein stability, most likely through an indirect mechanism. Plays a role in the regulation of DNA virus-mediated innate immune response by assembling into the HDP-RNP complex, a complex that serves as a platform for IRF3 phosphorylation and subsequent innate immune response activation through the cGAS-STING pathway. Also regulates the cGAS-STING pathway by catalyzing phosphorylation of CGAS, thereby impairing CGAS oligomerization and activation. Also regulates the cGAS-STING pathway by mediating phosphorylation of PARP1. The chain is DNA-dependent protein kinase catalytic subunit (Prkdc) from Mus musculus (Mouse).